Consider the following 584-residue polypeptide: UvrABC system protein C (584 aa).

One can recognise a GIY-YIG domain in the interval 14 to 91 (HKPGCYLWKD…IKTHLPKYNI (78 aa)). In terms of domain architecture, UVR spans 192–227 (DHILMILQTKEQHAVTKLDFENAQKYAEQQKALTSI).

It belongs to the UvrC family. Interacts with UvrB in an incision complex.

It localises to the cytoplasm. Its function is as follows. The UvrABC repair system catalyzes the recognition and processing of DNA lesions. UvrC both incises the 5' and 3' sides of the lesion. The N-terminal half is responsible for the 3' incision and the C-terminal half is responsible for the 5' incision. In Ureaplasma parvum serovar 3 (strain ATCC 27815 / 27 / NCTC 11736), this protein is UvrABC system protein C.